We begin with the raw amino-acid sequence, 471 residues long: uncharacterized protein (471 aa).

The next 11 membrane-spanning stretches (helical) occupy residues 15–35, 66–86, 89–109, 147–167, 179–199, 210–230, 237–257, 303–323, 353–373, 386–406, and 410–430; these read LWGP…TILL, PLQA…IVGV, AIMF…LFAM, WLGV…IMVQ, FSFN…LVVI, EFVV…IVLM, AFFS…GGFA, VIGI…IVLA, GYFV…VVIF, LAGH…AAGG, and IWGV…IALL.

The protein belongs to the alanine or glycine:cation symporter (AGCS) (TC 2.A.25) family.

The protein localises to the cell membrane. This is an uncharacterized protein from Bacillus subtilis (strain 168).